A 350-amino-acid polypeptide reads, in one-letter code: 4-hydroxy-2-oxovalerate aldolase 3 (350 aa).

The region spanning 13–265 is the Pyruvate carboxyltransferase domain; that stretch reads VVFHDMCLRD…DTGVDLFRLM (253 aa). 21 to 22 serves as a coordination point for substrate; sequence RD. Mn(2+) is bound at residue Asp-22. His-25 serves as the catalytic Proton acceptor. Residues Ser-175 and His-204 each coordinate substrate. Mn(2+) is bound by residues His-204 and His-206. Substrate is bound at residue Tyr-295.

The protein belongs to the 4-hydroxy-2-oxovalerate aldolase family.

It carries out the reaction (S)-4-hydroxy-2-oxopentanoate = acetaldehyde + pyruvate. This chain is 4-hydroxy-2-oxovalerate aldolase 3 (lapG), found in Azotobacter vinelandii (strain DJ / ATCC BAA-1303).